The chain runs to 492 residues: Bifunctional purine biosynthesis protein PurH (492 aa).

The MGS-like domain occupies 1–144 (MKKAILSVSN…KNYKHVTTIV (144 aa)).

Belongs to the PurH family.

It carries out the reaction (6R)-10-formyltetrahydrofolate + 5-amino-1-(5-phospho-beta-D-ribosyl)imidazole-4-carboxamide = 5-formamido-1-(5-phospho-D-ribosyl)imidazole-4-carboxamide + (6S)-5,6,7,8-tetrahydrofolate. The catalysed reaction is IMP + H2O = 5-formamido-1-(5-phospho-D-ribosyl)imidazole-4-carboxamide. It functions in the pathway purine metabolism; IMP biosynthesis via de novo pathway; 5-formamido-1-(5-phospho-D-ribosyl)imidazole-4-carboxamide from 5-amino-1-(5-phospho-D-ribosyl)imidazole-4-carboxamide (10-formyl THF route): step 1/1. The protein operates within purine metabolism; IMP biosynthesis via de novo pathway; IMP from 5-formamido-1-(5-phospho-D-ribosyl)imidazole-4-carboxamide: step 1/1. This chain is Bifunctional purine biosynthesis protein PurH, found in Staphylococcus aureus (strain JH1).